The chain runs to 507 residues: MEKFQIYLELDGSQQHNFLYPLLFREYIYALAQDHGLNRSTISLENGGYDNKSSSLSGKRLITLLYQQIHLSISANDSNPNQFIGHNNNLYSQMILEGFAVIVEIPFSLQLVSFLEGKEMAKSQNFQSIHSIFPFFEDNFSHLNYVLDVLIPHPIRPEILVQTFRYWVKDASSLHLLRFFLHEYFNWNSLITPKKSISGFSTSNPRFFLFLYNSHVYEYEFLFFFLRNQSSHLRLTSSGVLLERIHFYGKVDYFVEVFANGFQDILWLYKDLFMHYVRYQGKAILASKDTPLLMNKWKYYFVNLWQWHFHVWSQPVRAHINHLHKDSINFLGYLSSRRRNPLVVRSQMLENAYLIDNAMKKFETAVPIIPMVESLTKARFCNPLGNPISKPIWADSSDSHIIDRFVRICRNLSHYHSGSSKKKSLYRIKYILRVSCVKSLVRKHKSTVRVFLKRLGSEFFQDFLTEEEHVLSLIFSRASFTWRRLYRGRVWYLDIICINDLVNHDKF.

This sequence belongs to the intron maturase 2 family. MatK subfamily.

It localises to the plastid. The protein resides in the chloroplast. Its function is as follows. Usually encoded in the trnK tRNA gene intron. Probably assists in splicing its own and other chloroplast group II introns. The protein is Maturase K of Cupaniopsis anacardioides (Carrotwood).